We begin with the raw amino-acid sequence, 70 residues long: Large ribosomal subunit protein eL43 (70 aa).

The Zn(2+) site is built by Cys36, Cys39, Cys55, and Cys58. The segment at 36 to 58 adopts a C4-type zinc-finger fold; the sequence is CPVCKTTGKVVRIASGVWYCKKC.

This sequence belongs to the eukaryotic ribosomal protein eL43 family. Putative zinc-binding subfamily. Part of the 50S ribosomal subunit. Requires Zn(2+) as cofactor.

Binds to the 23S rRNA. This Sulfurisphaera tokodaii (strain DSM 16993 / JCM 10545 / NBRC 100140 / 7) (Sulfolobus tokodaii) protein is Large ribosomal subunit protein eL43.